Here is a 92-residue protein sequence, read N- to C-terminus: Probable Fe(2+)-trafficking protein (92 aa).

This sequence belongs to the Fe(2+)-trafficking protein family.

In terms of biological role, could be a mediator in iron transactions between iron acquisition and iron-requiring processes, such as synthesis and/or repair of Fe-S clusters in biosynthetic enzymes. This Shewanella frigidimarina (strain NCIMB 400) protein is Probable Fe(2+)-trafficking protein.